The primary structure comprises 371 residues: Probable inactive methyltransferase Os04g0175900 (371 aa).

Substrate is bound at residue 137 to 143 (LDVDEDN). Positions 170-188 (LFEYMGTNHRFNMLFNQAM) are substrate binding. S-adenosyl-L-methionine-binding residues include Gly216, Asp239, Met260, and Lys273.

Belongs to the class I-like SAM-binding methyltransferase superfamily. Cation-independent O-methyltransferase family. COMT subfamily.

This is Probable inactive methyltransferase Os04g0175900 from Oryza sativa subsp. japonica (Rice).